The primary structure comprises 172 residues: Translocator protein 2 (172 aa).

5 consecutive transmembrane segments (helical) span residues 3–23, 45–65, 80–100, 104–124, and 130–150; these read PQGA…SLLT, VLLA…YLVW, LGLY…FFAA, GLAL…ALIW, and LAAV…SIAY.

The protein belongs to the TspO/BZRP family. Homotetramer. May also form homodimer. Expressed in erythrocytes (at protein level).

Its subcellular location is the endoplasmic reticulum membrane. It localises to the cell membrane. In terms of biological role, cholesterol-binding protein involved in the redistribution of cholesterol from lipid droplets to the endoplasmic reticulum. Required to meet cholesterol demands during erythropoietic differentiation. May play a role in transport processes at the plasma membrane of erythrocytes, including regulating VDAC-mediated ATP export, and import of the heme precursors protoporphyrin IX and 5-aminolevulinic acid. This is Translocator protein 2 from Canis lupus familiaris (Dog).